A 392-amino-acid chain; its full sequence is L-lactate dehydrogenase (392 aa).

The FMN hydroxy acid dehydrogenase domain occupies 1–380; the sequence is MIISASTDYR…GSDSLVTGSA (380 aa). Tyr-24 is a binding site for substrate. Ser-106 and Gln-127 together coordinate FMN. Tyr-129 is a binding site for substrate. Thr-155 contributes to the FMN binding site. Position 164 (Arg-164) interacts with substrate. Lys-251 provides a ligand contact to FMN. Residue His-275 is the Proton acceptor of the active site. Arg-278 serves as a coordination point for substrate. 306–330 is an FMN binding site; sequence DSGVRNGLDVVRMIAMGADTILLGR.

This sequence belongs to the FMN-dependent alpha-hydroxy acid dehydrogenase family. It depends on FMN as a cofactor.

The protein localises to the cell inner membrane. The enzyme catalyses (S)-lactate + A = pyruvate + AH2. Functionally, catalyzes the conversion of L-lactate to pyruvate. Is coupled to the respiratory chain. The sequence is that of L-lactate dehydrogenase from Chromohalobacter salexigens (strain ATCC BAA-138 / DSM 3043 / CIP 106854 / NCIMB 13768 / 1H11).